Reading from the N-terminus, the 253-residue chain is 5'/3'-nucleotidase SurE (253 aa).

Positions 8, 9, 39, and 92 each coordinate a divalent metal cation.

This sequence belongs to the SurE nucleotidase family. It depends on a divalent metal cation as a cofactor.

Its subcellular location is the cytoplasm. It catalyses the reaction a ribonucleoside 5'-phosphate + H2O = a ribonucleoside + phosphate. The enzyme catalyses a ribonucleoside 3'-phosphate + H2O = a ribonucleoside + phosphate. It carries out the reaction [phosphate](n) + H2O = [phosphate](n-1) + phosphate + H(+). In terms of biological role, nucleotidase with a broad substrate specificity as it can dephosphorylate various ribo- and deoxyribonucleoside 5'-monophosphates and ribonucleoside 3'-monophosphates with highest affinity to 3'-AMP. Also hydrolyzes polyphosphate (exopolyphosphatase activity) with the preference for short-chain-length substrates (P20-25). Might be involved in the regulation of dNTP and NTP pools, and in the turnover of 3'-mononucleotides produced by numerous intracellular RNases (T1, T2, and F) during the degradation of various RNAs. The protein is 5'/3'-nucleotidase SurE of Escherichia coli O127:H6 (strain E2348/69 / EPEC).